A 482-amino-acid polypeptide reads, in one-letter code: UDP-N-acetylmuramate--L-alanine ligase (482 aa).

Residue 119 to 125 (GTHGKTT) participates in ATP binding.

Belongs to the MurCDEF family.

Its subcellular location is the cytoplasm. It catalyses the reaction UDP-N-acetyl-alpha-D-muramate + L-alanine + ATP = UDP-N-acetyl-alpha-D-muramoyl-L-alanine + ADP + phosphate + H(+). It functions in the pathway cell wall biogenesis; peptidoglycan biosynthesis. Cell wall formation. This Cyanothece sp. (strain PCC 7425 / ATCC 29141) protein is UDP-N-acetylmuramate--L-alanine ligase.